We begin with the raw amino-acid sequence, 101 residues long: Trp operon repressor homolog (101 aa).

The DNA-binding element occupies 59-82; it reads QREIQQNLSTSAATITRGSNMLKM.

Belongs to the TrpR family. Homodimer.

The protein localises to the cytoplasm. Functionally, this protein is an aporepressor. When complexed with L-tryptophan it binds the operator region of the trp operon and prevents the initiation of transcription. In Actinobacillus succinogenes (strain ATCC 55618 / DSM 22257 / CCUG 43843 / 130Z), this protein is Trp operon repressor homolog.